The primary structure comprises 367 residues: Leucine-rich repeat-containing protein 28 (367 aa).

9 LRR repeats span residues 16–36 (KHKNLFLNYRNLHHFPLELLK), 42–63 (YLERLYMKRNSLTSLPENLAQK), 66–87 (NLVELYLHSNNIVVVPEAIGSL), 89–110 (KLQCLDLSDNALEIVCPEIGRL), 112–133 (ALRHLRLANNQLQFLPPEVGDL), 135–156 (ELQTLDISTNRLLTLPERLHMC), 158–180 (SLQYLTVDRNRLWYVPRHLCQLP), 181–202 (SLNELSMAGNRLAFLPLDLGRS), and 204–226 (ELQYVYVDNNIHLKGLPSYLYNK).

The protein is Leucine-rich repeat-containing protein 28 (LRRC28) of Homo sapiens (Human).